Reading from the N-terminus, the 281-residue chain is Proline iminopeptidase PfmaB (281 aa).

An AB hydrolase-1 domain is found at 23 to 267 (PLVITLHGGR…NANHSVHVEK (245 aa)).

This sequence belongs to the peptidase S33 family.

The catalysed reaction is Release of N-terminal proline from a peptide.. Proline iminopeptidase; part of the gene cluster that mediates the biosynthesis of dihydroxynaphthalene (DHN)-melanin, a bluish-green pigment forming a dark layer in the conidial wall that protects the conidia from UV radiations. The first step of the pathway is the production of the pentaketide 1,3,6,8-tetrahydroxynaphthalene (1,3,6,8-THN or T4HN) by the polyketide synthase PfmaE though condensation of acetyl-CoA with malonyl-CoA. T4HN is not stable and easily oxidizes into the stable form flaviolin. T4HN is also substrate of the hydroxynaphthalene reductase PfmaG to yield scytalone. The scytalone dehydratase PfmaJ then reduces scytalone to 1,3,8-THN. 1,3,8-THN is then substrate of the hydroxynaphthalene reductase PfmaI to yield vermelone. Vermelone is further converted by the multicopper oxidase PfmaD to 1,8-DHN. Finally the laccase PFICI_06862 transforms 1,8-DHN to DHN-melanin. The roles of the 5-oxoprolinase PfmaA and the proline iminopeptidase PfmaB within the cluster have not been elucidated yet. This Pestalotiopsis fici (strain W106-1 / CGMCC3.15140) protein is Proline iminopeptidase PfmaB.